A 160-amino-acid chain; its full sequence is 6,7-dimethyl-8-ribityllumazine synthase (160 aa).

Residues tryptophan 27, alanine 59–glutamate 61, and valine 81–isoleucine 83 each bind 5-amino-6-(D-ribitylamino)uracil. Position 86–87 (glutamine 86–threonine 87) interacts with (2S)-2-hydroxy-3-oxobutyl phosphate. The Proton donor role is filled by histidine 89. A 5-amino-6-(D-ribitylamino)uracil-binding site is contributed by asparagine 114. Residue arginine 128 coordinates (2S)-2-hydroxy-3-oxobutyl phosphate.

The protein belongs to the DMRL synthase family. Homopentamer.

The catalysed reaction is (2S)-2-hydroxy-3-oxobutyl phosphate + 5-amino-6-(D-ribitylamino)uracil = 6,7-dimethyl-8-(1-D-ribityl)lumazine + phosphate + 2 H2O + H(+). It participates in cofactor biosynthesis; riboflavin biosynthesis; riboflavin from 2-hydroxy-3-oxobutyl phosphate and 5-amino-6-(D-ribitylamino)uracil: step 1/2. Its function is as follows. Catalyzes the formation of 6,7-dimethyl-8-ribityllumazine by condensation of 5-amino-6-(D-ribitylamino)uracil with 3,4-dihydroxy-2-butanone 4-phosphate. This is the penultimate step in the biosynthesis of riboflavin. The polypeptide is 6,7-dimethyl-8-ribityllumazine synthase (ribH) (Mycobacterium tuberculosis (strain CDC 1551 / Oshkosh)).